We begin with the raw amino-acid sequence, 357 residues long: tRNA pseudouridine synthase B (357 aa).

Aspartate 42 (nucleophile) is an active-site residue.

This sequence belongs to the pseudouridine synthase TruB family. Type 1 subfamily.

It carries out the reaction uridine(55) in tRNA = pseudouridine(55) in tRNA. In terms of biological role, responsible for synthesis of pseudouridine from uracil-55 in the psi GC loop of transfer RNAs. This chain is tRNA pseudouridine synthase B, found in Treponema denticola (strain ATCC 35405 / DSM 14222 / CIP 103919 / JCM 8153 / KCTC 15104).